The primary structure comprises 228 residues: Superoxide dismutase [Mn], mitochondrial (228 aa).

A mitochondrion-targeting transit peptide spans 1–24 (MALRTLVSRRTLATGLGFRQQLRG). Residues H52, H100, D189, and H193 each coordinate Mn(2+).

Belongs to the iron/manganese superoxide dismutase family. Homotetramer. Mn(2+) is required as a cofactor. In terms of tissue distribution, expressed most abundantly in parts of the plant which exhibit a high metabolic activity. Expressed in pre-shooting flower buds, vegetative buds, immature fruits and fully expanded leaves of basal shoots and seedlings.

Its subcellular location is the mitochondrion matrix. It carries out the reaction 2 superoxide + 2 H(+) = H2O2 + O2. Destroys superoxide anion radicals which are normally produced within the cells and which are toxic to biological systems. This Prunus persica (Peach) protein is Superoxide dismutase [Mn], mitochondrial (SOD).